The sequence spans 436 residues: GTPase Der (436 aa).

2 EngA-type G domains span residues 4–167 and 176–351; these read PTIA…PEQQ and IKFS…ENHR. Residues 10-17, 57-61, 119-122, 182-189, 229-233, and 294-297 contribute to the GTP site; these read GRANVGKS, DTGGI, NKID, GRPNVGKS, DTAGM, and NKWD. The KH-like domain maps to 352 to 436; sequence KRVQSSTLNE…PLHLIARKRN (85 aa).

The protein belongs to the TRAFAC class TrmE-Era-EngA-EngB-Septin-like GTPase superfamily. EngA (Der) GTPase family. As to quaternary structure, associates with the 50S ribosomal subunit.

Functionally, GTPase that plays an essential role in the late steps of ribosome biogenesis. In Macrococcus caseolyticus (strain JCSC5402) (Macrococcoides caseolyticum), this protein is GTPase Der.